A 902-amino-acid chain; its full sequence is MKIAVIGQSLFGREVYRELLKEGHQVVGVFTIPDKNGKADPLGADAEKDGIPVFKFPRWRVKGQAIPEVVEKYKALEAELNVLPFCSQFIPMEVIDCPKHGSIIYHPSILPRHRGASAINWTLMQGDKIGGFTIFWADDGLDTGDILLQRECEVLPDDTVNTIYNRFLFPEGVKGMVEAVRLIAEGNAPRIKQATEGATYDPMQKKENAKINWDQPAEAIHNFIRGNDKVPGAWTVVGDQQLTFFGSSFISNGPAPDGQPLEIPGAFRPAVVTKTGLVLFGNDGQKLSVKNIQFEDGKMIPASQYYKTADSAALQLSDEEKKFSEEIRAAWKRILTNVSEIEDSTDFFKAGAASMDVVRLVEEVKLKCNGLQLQNEDVYMATKFEEFIQMVVRRLRGEDGEEELVVDYVEKEINNMTVKIPHQLFINGQFIDAEGGKTYDTVNPTDGTAICKVSLAQVSDIDRAVAAAKEAFENGEWGKMNPRDRGRILYRLADIMEEHQEELATIESIDSGAVYTLALKTHVGMSIQTFRYFAGWCDKIQGSTIPINQARPNRNLTFTRREPIGVCGIVIPWNYPLMMLAWKTAACLAAGNTVVLKPAQVTPLTALKFAELSVKAGIPKGVINILPGAGSLIGQRLSDHPDVRKIGFTGSTPIGKHIMKSCAVGNVKKVSLELGGKSPLIIFQDCDLDKAVRMGMSSVFFNKGENCIAAGRLFLEESIHDEFVKRVVGEVKKMKIGDPLDRSTDHGPQNHKAHLDKLIEYCQTGVKEGAKLVYGGKQVERPGFFFEPTIFTDVTDEMFIAKEESFGPIMIISKFKDGDVDEVLKRANNTEFGLASGVFTKDISKALYVSEKLQAGTVFVNTYNKTDVAAPFGGFKQSGFGKDLGEEALNEYLKTKAVTIEY.

A hydrolase domain region spans residues 1 to 310 (MKIAVIGQSL…PASQYYKTAD (310 aa)). 88–90 (QFI) is a (6R)-10-formyltetrahydrofolate binding site. The active-site Proton donor is the H106. D142 is a binding site for (6R)-10-formyltetrahydrofolate. Residues 318–395 (DEEKKFSEEI…EFIQMVVRRL (78 aa)) enclose the Carrier domain. O-(pantetheine 4'-phosphoryl)serine is present on S354. The interval 417-902 (TVKIPHQLFI…LKTKAVTIEY (486 aa)) is aldehyde dehydrogenase domain. NADP(+) is bound by residues 571–573 (IPW), 597–600 (KPAQ), 630–635 (GSLIGQ), 650–651 (GS), and 673–674 (EL). Residue E673 is the Proton acceptor of the active site. The Proton donor role is filled by C707. NADP(+)-binding positions include K757 and 804-806 (ESF).

In the N-terminal section; belongs to the GART family. It in the C-terminal section; belongs to the aldehyde dehydrogenase family. ALDH1L subfamily. As to quaternary structure, homotetramer. Phosphopantetheinylation at Ser-354 by AASDHPPT is required for the formyltetrahydrofolate dehydrogenase activity.

It localises to the cytoplasm. The protein localises to the cytosol. The catalysed reaction is (6R)-10-formyltetrahydrofolate + NADP(+) + H2O = (6S)-5,6,7,8-tetrahydrofolate + CO2 + NADPH + H(+). Functionally, cytosolic 10-formyltetrahydrofolate dehydrogenase that catalyzes the NADP(+)-dependent conversion of 10-formyltetrahydrofolate to tetrahydrofolate and carbon dioxide. May also have an NADP(+)-dependent aldehyde dehydrogenase activity towards formaldehyde, acetaldehyde, propionaldehyde, and benzaldehyde. Regulates reduced folate pools as well as glycine metabolism. This chain is Cytosolic 10-formyltetrahydrofolate dehydrogenase (aldh1l1), found in Xenopus tropicalis (Western clawed frog).